A 681-amino-acid chain; its full sequence is Sterile alpha motif domain-containing protein 11 (681 aa).

4 disordered regions span residues 41–77 (RNLK…EDGP), 212–234 (YHLG…HLPS), 251–307 (GPSG…APHV), and 407–498 (LLAL…GAEG). Residue K72 forms a Glycyl lysine isopeptide (Lys-Gly) (interchain with G-Cter in SUMO2) linkage. Residues 219-234 (HGEDPPWHDPPHHLPS) are compositionally biased toward basic and acidic residues. Over residues 412 to 423 (PQGPPGSGPPTP) the composition is skewed to pro residues. T485 is modified (phosphothreonine). The 66-residue stretch at 543–608 (WTVDDVCSFV…AQVARRLGRV (66 aa)) folds into the SAM domain. The interval 625-681 (LRAPERELGTGEQPLSPTTATSPYGGGHALAGQTSPKQENGTLALLPGAPDPSQPLC) is disordered. Polar residues-rich tracts occupy residues 637–646 (QPLSPTTATS) and 656–665 (GQTSPKQENG). S640 bears the Phosphoserine mark.

Self-associates. Component of a Polycomb group (PcG) multiprotein PRC1-like complex. Interacts with SAMD7 and PHC2. As to expression, expressed in the outer and inner nuclear layers, ganglion cell layer and rod photoreceptors of the retina (at protein level). Widely expressed, showing the highest expression in kidney, prostate and retina.

The protein localises to the nucleus. Functionally, component of a Polycomb group (PcG) multiprotein PRC1-like complex, essential for establishing rod photoreceptor cell identity and function by silencing nonrod gene expression in developing rod photoreceptor cells. The polypeptide is Sterile alpha motif domain-containing protein 11 (SAMD11) (Homo sapiens (Human)).